The sequence spans 285 residues: Biotin synthase (285 aa).

The 222-residue stretch at 2 to 223 folds into the Radical SAM core domain; sequence STRKQIFLCA…RRAHTLLGED (222 aa). Cys20, Cys24, and Cys27 together coordinate [4Fe-4S] cluster. Cys64, Cys99, and Cys157 together coordinate [2Fe-2S] cluster.

It belongs to the radical SAM superfamily. Biotin synthase family. Homodimer. [4Fe-4S] cluster serves as cofactor. [2Fe-2S] cluster is required as a cofactor.

It carries out the reaction (4R,5S)-dethiobiotin + (sulfur carrier)-SH + 2 reduced [2Fe-2S]-[ferredoxin] + 2 S-adenosyl-L-methionine = (sulfur carrier)-H + biotin + 2 5'-deoxyadenosine + 2 L-methionine + 2 oxidized [2Fe-2S]-[ferredoxin]. Its pathway is cofactor biosynthesis; biotin biosynthesis; biotin from 7,8-diaminononanoate: step 2/2. Its function is as follows. Catalyzes the conversion of dethiobiotin (DTB) to biotin by the insertion of a sulfur atom into dethiobiotin via a radical-based mechanism. The protein is Biotin synthase of Sulfurovum sp. (strain NBC37-1).